Here is a 274-residue protein sequence, read N- to C-terminus: Putative ankyrin repeat protein R597 (274 aa).

ANK repeat units lie at residues 78 to 112 (VGLPSLGYFTKNKDEFHNSLELMKLLLQYDMNNND), 114 to 144 (PISEYLYNAVKQNNFEKVKLLIDNGINSLKI), 146 to 174 (SRYHFENKYIYNNHEIVKYMIDNGVDIQG), and 176 to 205 (NLSYALHSCIISDNNDGVEYYFNIGANIND).

This Acanthamoeba polyphaga mimivirus (APMV) protein is Putative ankyrin repeat protein R597.